Reading from the N-terminus, the 259-residue chain is Sphinganine C4-monooxygenase 2 (259 aa).

3 helical membrane passes run 10–30 (FLGT…YICL), 54–74 (AVVK…VILF), and 91–111 (ILLL…WQYF). Residues 98 to 234 (FIIAMLVIDT…FVMWDRILGT (137 aa)) enclose the Fatty acid hydroxylase domain. Positions 113–117 (HRYMH) match the Histidine box-1 motif. The Histidine box-2 motif lies at 127 to 131 (HSQHH). The Histidine box-3 motif lies at 206 to 212 (YHDVHHQ).

The protein belongs to the sterol desaturase family. Requires Fe cation as cofactor. As to expression, ubiquitous, with higher levels in flowers and roots.

The protein localises to the endoplasmic reticulum membrane. It catalyses the reaction a dihydroceramide + 2 Fe(II)-[cytochrome b5] + O2 + 2 H(+) = a phytoceramide + 2 Fe(III)-[cytochrome b5] + H2O. The protein operates within membrane lipid metabolism; sphingolipid biosynthesis. Functionally, involved in sphingolipid trihydroxy long-chain base (4-hydroxysphinganine) biosynthesis. Can use C18- and C20-sphinganine as substrates to produce C18- and C20-phytosphinganines (D-ribo-2-amino-1,3,4-trihydroxyoctadecane and -eicosane). The chain is Sphinganine C4-monooxygenase 2 (SBH2) from Arabidopsis thaliana (Mouse-ear cress).